Reading from the N-terminus, the 392-residue chain is MEGHVKRPMNAFMVWSRGERHKLAQQNPSMQNTEISKQLGCRWKSLTEAEKRPFFQEAQRLKILHREKYPNYKYQPHRRAKVSQRSGILQPAVASTKLYNLLQWDRNPHAITYRQDWSRAAHLYSKNQQSFYWQPVDIPTGHLQQQQQQQQQQQFHNHHQQQQQFYDHHQQQQQQQQQQQQFHDHHQQKQQFHDHHQQQQQFHDHHHHHQEQQFHDHHQQQQQFHDHQQQQQQQQQQQFHDHHQQKQQFHDHHHHQQQQQFHDHQQQQQQFHDHQQQQHQFHDHPQQKQQFHDHPQQQQQFHDHHHQQQQKQQFHDHHQQKQQFHDHHQQKQQFHDHHQQQQQFHDHHQQQQQQQQQQQQQFHDQQLTYLLTADITGWKGIKHCTGPDPEPF.

Residues 4-81 are sufficient for interaction with KPNB1; sequence HVKRPMNAFM…YKYQPHRRAK (78 aa). A DNA-binding region (HMG box) is located at residues 5-73; that stretch reads VKRPMNAFMV…LHREKYPNYK (69 aa). Required for nuclear localization regions lie at residues 6-22 and 75-81; these read KRPM…ERHK and QPHRRAK. The tract at residues 52–84 is sufficient for interaction with EP300; that stretch reads RPFFQEAQRLKILHREKYPNYKYQPHRRAKVSQ. An N6-acetyllysine modification is found at K81. The segment at 92 to 144 is necessary for interaction with ZNF208 isoform KRAB-O; the sequence is AVASTKLYNLLQWDRNPHAITYRQDWSRAAHLYSKNQQSFYWQPVDIPTGHLQ. The segment at 94 to 138 is necessary for interaction with SLC9A3R2 and nuclear accumulation of SLC9A3R2; the sequence is ASTKLYNLLQWDRNPHAITYRQDWSRAAHLYSKNQQSFYWQPVDI. Residues 142–361 form a disordered region; sequence HLQQQQQQQQ…QQQQQQQQQQ (220 aa). Residues 144–181 show a composition bias toward low complexity; sequence QQQQQQQQQQQFHNHHQQQQQFYDHHQQQQQQQQQQQQ. 2 stretches are compositionally biased toward basic and acidic residues: residues 182 to 197 and 210 to 228; these read FHDH…DHHQ and QEQQ…HDHQ. Residues 229 to 238 are compositionally biased toward low complexity; it reads QQQQQQQQQQ. Composition is skewed to basic and acidic residues over residues 239–250, 261–295, and 313–349; these read FHDHHQQKQQFH, FHDH…HDHP, and QFHD…DHHQ. The segment covering 350–361 has biased composition (low complexity); sequence QQQQQQQQQQQQ.

It belongs to the SRY family. Interacts with KPNB1, ZNF208 isoform KRAB-O, PARP1 and SLC9A3R2. The interaction with KPNB1 is sensitive to dissociation by Ran in the GTP-bound form. Interaction with PARP1 impaired its DNA-binding activity. Interacts with CALM, EP300, HDAC3 and WT1. The interaction with EP300 modulates its DNA-binding activity. Post-translationally, degraded due to the presence of a degron at the C-terminus that promotes its degradation. In terms of processing, phosphorylated on serine residues by PKA. Phosphorylation by PKA enhances its DNA-binding activity and stimulates transcription repression. Acetylation of Lys-81 contributes to its nuclear localization and enhances its interaction with KPNB1. Post-translationally, poly-ADP-ribosylated by PARP1. ADP-ribosylation reduces its DNA-binding activity. As to expression, expressed in gonadal somatic pre-Sertoli cells. Expressed in the substantia nigra of the brain (at protein level). Expressed in diencephalon, cortex, the substantia nigra of the midbrain and the medial mammillary bodies of the hypothalamus of male, but not female. In terms of tissue distribution, expressed in gonadal somatic pre-Sertoli cells. While it is expressed at lower level compared to isoform Sry-S, this form is more stable and constitutes the predominant protein product of the Sry locus in XY gonads (at protein level).

Its subcellular location is the nucleus speckle. The protein localises to the cytoplasm. It is found in the nucleus. Functionally, transcriptional regulator that controls a genetic switch in male development. It is necessary and sufficient for initiating male sex determination by directing the development of supporting cell precursors (pre-Sertoli cells) as Sertoli rather than granulosa cells. Involved in different aspects of gene regulation including promoter activation or repression. Binds to the DNA consensus sequence 5'-[AT]AACAA[AT]-3'. SRY HMG box recognizes DNA by partial intercalation in the minor groove and promotes DNA bending. Also involved in pre-mRNA splicing. In male adult brain involved in the maintenance of motor functions of dopaminergic neurons. In terms of biological role, constitutes the major isoform, which is necessary and sufficient for initiating male sex determination. Its function is as follows. Constitutes a minor isoform, which is unstable due to the presence of a degron at the C-terminus that promotes its degradation. Not necessary and sufficient for initiating male sex determination. The protein is Sex-determining region Y protein of Mus musculus (Mouse).